The following is a 181-amino-acid chain: Achaete-scute homolog 3 (181 aa).

The tract at residues 93 to 106 (AFTRKRNERERQRV) is basic motif. The bHLH domain maps to 93 to 145 (AFTRKRNERERQRVKCVNEGYAQLRHHLPEEYLEKRLSKVETLRAAIKYINYL). Positions 107–145 (KCVNEGYAQLRHHLPEEYLEKRLSKVETLRAAIKYINYL) are helix-loop-helix motif.

Efficient DNA binding requires dimerization with another bHLH protein. As to expression, widely expressed in fetal and adult tissues.

The protein resides in the nucleus. In terms of biological role, transcriptional repressor. Inhibits myogenesis. Plays a role in progenitor cells which differentiate into ductal and acinar, but not myoepithelial, cell lineages in the salivary glands. Involved in the functions of the microvillar cells and Bowman's glands and probably, in a non-cell-autonomous manner, in the development or regeneration of a complete olfactory epithelium (OE). The chain is Achaete-scute homolog 3 from Homo sapiens (Human).